Reading from the N-terminus, the 778-residue chain is Ribonucleoside-diphosphate reductase large subunit (778 aa).

Residues S177, 192–193 (SC), G221, 419–423 (NLCIE), and 613–617 (PTATS) contribute to the substrate site. C193 and C439 are joined by a disulfide. The active-site Proton acceptor is the N419. The active-site Cysteine radical intermediate is C421. E423 functions as the Proton acceptor in the catalytic mechanism.

It belongs to the ribonucleoside diphosphate reductase large chain family. In terms of assembly, heterotetramer composed of a homodimer of the large subunit (R1) and a homodimer of the small subunit (R2). Larger multisubunit protein complex are also active, composed of (R1)n(R2)n.

The catalysed reaction is a 2'-deoxyribonucleoside 5'-diphosphate + [thioredoxin]-disulfide + H2O = a ribonucleoside 5'-diphosphate + [thioredoxin]-dithiol. With respect to regulation, under complex allosteric control mediated by deoxynucleoside triphosphates and ATP binding. The type of nucleotide bound at the specificity site determines substrate preference. It seems probable that ATP makes the enzyme reduce CDP and UDP, dGTP favors ADP reduction and dTTP favors GDP reduction. In terms of biological role, ribonucleoside-diphosphate reductase holoenzyme provides the precursors necessary for viral DNA synthesis. Allows virus growth in non-dividing cells. Catalyzes the biosynthesis of deoxyribonucleotides from the corresponding ribonucleotides. In African swine fever virus (isolate Tick/South Africa/Pretoriuskop Pr4/1996) (ASFV), this protein is Ribonucleoside-diphosphate reductase large subunit.